Reading from the N-terminus, the 712-residue chain is Polyribonucleotide nucleotidyltransferase (712 aa).

Mg(2+) is bound by residues Asp487 and Asp493. A KH domain is found at 554–613; that stretch reads PKIITMTINPDKIRDVIGPSGKQINKIIEETGVKIDIEQDGTVFISSINQEMNDKAKKII. Positions 623–691 constitute an S1 motif domain; it reads GEIYEGKVKR…KQGRVNLSRK (69 aa).

The protein belongs to the polyribonucleotide nucleotidyltransferase family. Mg(2+) is required as a cofactor.

It localises to the cytoplasm. The catalysed reaction is RNA(n+1) + phosphate = RNA(n) + a ribonucleoside 5'-diphosphate. Involved in mRNA degradation. Catalyzes the phosphorolysis of single-stranded polyribonucleotides processively in the 3'- to 5'-direction. This chain is Polyribonucleotide nucleotidyltransferase, found in Bacillus cereus (strain 03BB102).